We begin with the raw amino-acid sequence, 247 residues long: Ras-like protein family member 11B (247 aa).

A small GTPase-like region spans residues 28–245 (AGRRLVKIAV…ALSAKVRTVT (218 aa)). Residues 39 to 46 (GASGVGKT), 86 to 93 (DTPGIQVH), and 151 to 154 (NKAD) each bind GTP. The interval 202–228 (PKQQPSSTPEKRRTSLIPRPKSPNMQD) is disordered.

This sequence belongs to the small GTPase superfamily. Ras family.

The enzyme catalyses GTP + H2O = GDP + phosphate + H(+). The polypeptide is Ras-like protein family member 11B (Mus musculus (Mouse)).